Consider the following 173-residue polypeptide: MPVPQPDGKTPAFGNLYAIGWSAVNFLVLLALMYKFAYGPINNMLEQRTNAIEGSLKHAEEVKLEVEQMRKETASNLAESRKEAQEIVARATKAAEESKNEIIAKAKEESTLIKNKAAAEIQAATEQAKLELKDSAVSLAILAAEKVLSRAINDDDHKNLVKQFVNEAGDLLC.

A helical membrane pass occupies residues 12 to 34 (AFGNLYAIGWSAVNFLVLLALMY).

It belongs to the ATPase B chain family. F-type ATPases have 2 components, F(1) - the catalytic core - and F(0) - the membrane proton channel. F(1) has five subunits: alpha(3), beta(3), gamma(1), delta(1), epsilon(1). F(0) has three main subunits: a(1), b(2) and c(10-14). The alpha and beta chains form an alternating ring which encloses part of the gamma chain. F(1) is attached to F(0) by a central stalk formed by the gamma and epsilon chains, while a peripheral stalk is formed by the delta and b chains.

It is found in the cell membrane. F(1)F(0) ATP synthase produces ATP from ADP in the presence of a proton or sodium gradient. F-type ATPases consist of two structural domains, F(1) containing the extramembraneous catalytic core and F(0) containing the membrane proton channel, linked together by a central stalk and a peripheral stalk. During catalysis, ATP synthesis in the catalytic domain of F(1) is coupled via a rotary mechanism of the central stalk subunits to proton translocation. Its function is as follows. Component of the F(0) channel, it forms part of the peripheral stalk, linking F(1) to F(0). The polypeptide is ATP synthase subunit b (Syntrophomonas wolfei subsp. wolfei (strain DSM 2245B / Goettingen)).